We begin with the raw amino-acid sequence, 563 residues long: MLTVDDVLEQVGEFGWFQKQTFLILCLLSAAFAPIYVGIVFLAFTPDHRCRSPGVAELSRRCGWSLAEELNYTVPGPGPESQCLRYEVDWNQSTLGCLDPLASLATNGSPLPLGPCEQGWVYDTPGSSIVTEFNLVCDDSWKVDLFQSCVNLGFFLGSLGVGYIADRFGRKVCLLATTLTCASLGVLTAVAPDYTSLLIFRLLQGLVSKGSWTAGYTLITEFVGLGYRRTVAILYQMAFTVGLVLLSGLAYILPHWRWLQLAVSLPIFLLLFRFWFVPESPRWLLSQKRNTEAIKIMDHIAQKNGKLPPADLKMLSLEEDVTEKLSPSFIDLFRTPNLRKYTFILMYLWFTSSVVYQGLIMHVGATGGNLYLDFLYSALVEFPAGFIILVTIDRFGRRYPLATSNLAAGLACFLMIFIPHDLPWLNIMVACVGRMGITIVFQMVCLVNAELFPTFIRNLGMMVCSSLCDLGGVLTPFLVFRLMEVWQGSPLILFAALGLVAGGMTLLLPETKGVTLPETIEDAENLQRKAKPKENKIYLQVQTSELNTQAAERDASQGTAQQK.

The Cytoplasmic segment spans residues 1–21; the sequence is MLTVDDVLEQVGEFGWFQKQT. The helical transmembrane segment at 22 to 42 threads the bilayer; the sequence is FLILCLLSAAFAPIYVGIVFL. Residues 43–144 are Extracellular-facing; sequence AFTPDHRCRS…LVCDDSWKVD (102 aa). An N-linked (GlcNAc...) asparagine glycan is attached at Asn-71. Residues 145-165 traverse the membrane as a helical segment; sequence LFQSCVNLGFFLGSLGVGYIA. The Cytoplasmic portion of the chain corresponds to 166–171; it reads DRFGRK. The chain crosses the membrane as a helical span at residues 172–192; the sequence is VCLLATTLTCASLGVLTAVAP. Residues 193–196 are Extracellular-facing; the sequence is DYTS. A helical membrane pass occupies residues 197 to 219; sequence LLIFRLLQGLVSKGSWTAGYTLI. Topologically, residues 220–232 are cytoplasmic; it reads TEFVGLGYRRTVA. A helical membrane pass occupies residues 233–253; the sequence is ILYQMAFTVGLVLLSGLAYIL. The Extracellular segment spans residues 254-257; sequence PHWR. The helical transmembrane segment at 258-278 threads the bilayer; sequence WLQLAVSLPIFLLLFRFWFVP. Residues 278-282 carry the Proline-rich sequence motif; sequence PESPR. Over 279-342 the chain is Cytoplasmic; that stretch reads ESPRWLLSQK…FRTPNLRKYT (64 aa). Ser-328 carries the post-translational modification Phosphoserine. A helical transmembrane segment spans residues 343 to 363; that stretch reads FILMYLWFTSSVVYQGLIMHV. At 364–371 the chain is on the extracellular side; the sequence is GATGGNLY. The helical transmembrane segment at 372-392 threads the bilayer; the sequence is LDFLYSALVEFPAGFIILVTI. Residues 393-398 are Cytoplasmic-facing; that stretch reads DRFGRR. Residues 399-418 traverse the membrane as a helical segment; the sequence is YPLATSNLAAGLACFLMIFI. Over 419–423 the chain is Extracellular; that stretch reads PHDLP. The chain crosses the membrane as a helical span at residues 424-446; that stretch reads WLNIMVACVGRMGITIVFQMVCL. Residues 447–459 lie on the Cytoplasmic side of the membrane; that stretch reads VNAELFPTFIRNL. A helical membrane pass occupies residues 460–480; it reads GMMVCSSLCDLGGVLTPFLVF. Residues 481 to 487 lie on the Extracellular side of the membrane; sequence RLMEVWQ. Residues 488–508 traverse the membrane as a helical segment; the sequence is GSPLILFAALGLVAGGMTLLL. Residues 509 to 563 lie on the Cytoplasmic side of the membrane; it reads PETKGVTLPETIEDAENLQRKAKPKENKIYLQVQTSELNTQAAERDASQGTAQQK.

The protein belongs to the major facilitator (TC 2.A.1) superfamily. Organic cation transporter (TC 2.A.1.19) family. Phosphorylated.

It is found in the basolateral cell membrane. Its subcellular location is the apical cell membrane. The protein resides in the lateral cell membrane. It localises to the basal cell membrane. The protein localises to the cell membrane. The catalysed reaction is 1-methylnicotinamide(out) = 1-methylnicotinamide(in). The enzyme catalyses dopamine(out) = dopamine(in). It catalyses the reaction serotonin(out) = serotonin(in). It carries out the reaction (R)-adrenaline(out) = (R)-adrenaline(in). The catalysed reaction is (R)-noradrenaline(out) = (R)-noradrenaline(in). The enzyme catalyses histamine(out) = histamine(in). It catalyses the reaction guanidine(out) = guanidine(in). It carries out the reaction choline(out) = choline(in). The catalysed reaction is acetylcholine(in) = acetylcholine(out). The enzyme catalyses thiamine(in) = thiamine(out). It catalyses the reaction spermidine(in) = spermidine(out). It carries out the reaction agmatine(out) = agmatine(in). The catalysed reaction is putrescine(out) = putrescine(in). The enzyme catalyses (R)-carnitine(in) = (R)-carnitine(out). It catalyses the reaction O-isobutanoyl-(R)-carnitine(in) = O-isobutanoyl-(R)-carnitine(out). It carries out the reaction O-acetyl-(R)-carnitine(in) = O-acetyl-(R)-carnitine(out). The catalysed reaction is O-3-hydroxybutanoyl-(R)-carnitine(in) = O-3-hydroxybutanoyl-(R)-carnitine(out). The enzyme catalyses O-propanoyl-(R)-carnitine(in) = O-propanoyl-(R)-carnitine(out). It catalyses the reaction O-butanoyl-(R)-carnitine(in) = O-butanoyl-(R)-carnitine(out). It carries out the reaction O-2-methylbutanoyl-(R)-carnitine(in) = O-2-methylbutanoyl-(R)-carnitine(out). The catalysed reaction is O-3-methylbutanoyl-(R)-carnitine(in) = O-3-methylbutanoyl-(R)-carnitine(out). The enzyme catalyses O-hexanoyl-(R)-carnitine(in) = O-hexanoyl-(R)-carnitine(out). It catalyses the reaction L-histidyl-L-proline diketopiperazine(in) = L-histidyl-L-proline diketopiperazine(out). It carries out the reaction (R)-salsolinol(in) = (R)-salsolinol(out). The catalysed reaction is prostaglandin F2alpha(out) = prostaglandin F2alpha(in). The enzyme catalyses prostaglandin E2(out) = prostaglandin E2(in). Its activity is regulated as follows. Phosphorylation of the transporter leads to changes in its substrate affinity, resulting in a regulation of the transport activity. In contrast with rat ortholog, ASP uptake is inhibited by protein kinase A (PKA) and C (PKC) activation. ASP uptake is also endogenously activated by calmodulin, the calmodulin-dependent kinase II and LCK tyrosine kinase. Inhibited by cGMP, most likely through a cGMP-binding protein that interacts with OCT1. Electrogenic voltage-dependent transporter that mediates the transport of a variety of organic cations such as endogenous bioactive amines, cationic drugs and xenobiotics. Functions as a pH- and Na(+)-independent, bidirectional transporter. Cation cellular uptake or release is driven by the electrochemical potential (i.e. membrane potential and concentration gradient) and substrate selectivity. Hydrophobicity is a major requirement for recognition in polyvalent substrates and inhibitors. Primarily expressed in the basolateral membrane of hepatocytes and proximal tubules and involved in the uptake and disposition of cationic compounds from the blood by hepatic and renal clearance. Most likely functions as an uptake carrier in enterocytes contributing to the intestinal elimination of organic cations from the systemic circulation. Transports endogenous monoamines such as N-1-methylnicotinamide (NMN), guanidine, neurotransmitters dopamine, serotonin, noradrenaline, adrenaline and histamine, and quaternary ammonium compound such as choline. Also transports natural polyamines such as spermidine, agmatine and putrescine at low affinity, but relatively high turnover. Involved in the hepatic and intestinal uptake of the vitamin B1/thiamine, hence regulating hepatic lipid and energy metabolism. Contributes to the influx and efflux of fatty acid carriers carnitines and acylcarnitines across the basolateral membrane of hepatocytes, from the liver to the systemic circulation and inversely and may be involved in regulating the systemic availability of hepatic acylcarnitines. Also capable of transporting non-amine endogenous compounds such as prostaglandin E2 (PGE2) and prostaglandin F2-alpha (PGF2-alpha). May contribute to the transport of cationic compounds in testes across the blood-testis-barrier. Also mediates the uptake of xenobiotics tributylmethylammonium (TBuMA), quinidine, N-methyl-quinine (NMQ), N-methyl-quinidine (NMQD) N-(4,4-azo-n-pentyl)-quinuclidine (APQ), azidoprocainamide methoiodide (AMP), N-(4,4-azo-n-pentyl)-21-deoxyajmalinium (APDA) and 4-(4-(dimethylamino)styryl)-N-methylpyridinium (ASP). The polypeptide is Solute carrier family 22 member 1 (SLC22A1) (Bos taurus (Bovine)).